A 122-amino-acid chain; its full sequence is Large ribosomal subunit protein uL22 (122 aa).

The protein belongs to the universal ribosomal protein uL22 family. As to quaternary structure, part of the 50S ribosomal subunit.

This protein binds specifically to 23S rRNA; its binding is stimulated by other ribosomal proteins, e.g. L4, L17, and L20. It is important during the early stages of 50S assembly. It makes multiple contacts with different domains of the 23S rRNA in the assembled 50S subunit and ribosome. Functionally, the globular domain of the protein is located near the polypeptide exit tunnel on the outside of the subunit, while an extended beta-hairpin is found that lines the wall of the exit tunnel in the center of the 70S ribosome. This chain is Large ribosomal subunit protein uL22, found in Caldicellulosiruptor saccharolyticus (strain ATCC 43494 / DSM 8903 / Tp8T 6331).